Here is a 920-residue protein sequence, read N- to C-terminus: Dynamin-2B (920 aa).

Met1 carries the post-translational modification N-acetylmethionine. The region spanning 35–303 is the Dynamin-type G domain; it reads PATSLNVVAL…IRSRMKLRLP (269 aa). The tract at residues 45–52 is G1 motif; it reads GNVGAGKS. 45–53 serves as a coordination point for GTP; it reads GNVGAGKSA. The segment at 71–73 is G2 motif; the sequence is ATR. A G3 motif region spans residues 143 to 146; sequence DLPG. Positions 204-207 are G4 motif; sequence SKID. A GTP-binding site is contributed by 204-210; it reads SKIDQAA. The tract at residues 238–241 is G5 motif; sequence ALIG. 246-249 contributes to the GTP binding site; sequence IASA. The segment covering 507-522 has biased composition (basic and acidic residues); sequence RREEELKGRSSKKGQD. Disordered regions lie at residues 507–577 and 632–657; these read RREE…TAGP and IEEISDDEGEKSKSSKDKKSNGPDSK. The segment covering 523 to 545 has biased composition (polar residues); that stretch reads AEQSLLNRATSPQPDGPSSTGGS. Composition is skewed to basic and acidic residues over residues 548–567 and 641–652; these read SLRDKLMPQDKDKDKEKETP and EKSKSSKDKKSN. Residues 579–703 form the PH domain; it reads GEITAGYLMK…WINKLQKVIQ (125 aa). Residues 737-830 enclose the GED domain; it reads LRWMSQEVRG…QLSIHDNRAA (94 aa). The interval 747–761 is important for homodimerization; sequence YVEAVLNSLAANVPK. Positions 788–812 form a coiled coil; that stretch reads NERIESLIQEDQNVKRRRDRYQKQS. The segment at 828–920 is disordered; that stretch reads RAAAASSWSD…PPQSGSSYRY (93 aa). Positions 833–849 are enriched in polar residues; sequence SSWSDNSGTESSPRTNG.

Belongs to the TRAFAC class dynamin-like GTPase superfamily. Dynamin/Fzo/YdjA family. In terms of assembly, interacts with DRP1A at the plasma membrane and in forming clathrin-coated vesicles (CCV). Ubiquitous. Preferentially expressed in siliques.

The protein localises to the cytoplasm. The protein resides in the cytoskeleton. It is found in the cytoplasmic vesicle. Its subcellular location is the clathrin-coated vesicle. It localises to the cell membrane. The catalysed reaction is GTP + H2O = GDP + phosphate + H(+). In terms of biological role, putative microtubule-associated force-producing protein, able to bind and hydrolyze GTP. Collaboratively with DRP1A, participates in clathrin-coated vesicle formation during endocytosis. With DRP1A and PIP5K3, required for the precise coordination of polar ARAC3/ROP6 and ARAC4/ROP2 placement and subsequent root hair positioning during planar polarity formation in root hair-forming cells. This Arabidopsis thaliana (Mouse-ear cress) protein is Dynamin-2B.